Reading from the N-terminus, the 262-residue chain is Insulin-like growth factor-binding protein 1 (262 aa).

The signal sequence occupies residues 1 to 25; the sequence is MPEVPAVRAWPLLLSLALQLGAAAG. Residues 28–108 enclose the IGFBP N-terminal domain; sequence QPLHCAPCSA…TRGQGACMPA (81 aa). Intrachain disulfides connect Cys-32–Cys-59, Cys-35–Cys-61, Cys-43–Cys-62, Cys-50–Cys-65, Cys-72–Cys-85, and Cys-79–Cys-105. The tract at residues 101–133 is disordered; sequence GQGACMPAPSAEATETKDPAAPETTSPESTEMT. The segment covering 121–131 has biased composition (low complexity); sequence APETTSPESTE. Phosphoserine is present on residues Ser-126, Ser-129, and Ser-147. Tyr-161 bears the Phosphotyrosine mark. One can recognise a Thyroglobulin type-1 domain in the interval 176–254; it reads KEPCQRELYK…STAVRGDPKC (79 aa). Intrachain disulfides connect Cys-179–Cys-209, Cys-220–Cys-231, and Cys-233–Cys-254. Ser-245 bears the Phosphoserine mark. The Cell attachment site signature appears at 249 to 251; it reads RGD.

Binds equally well IGF1 and IGF2. Interacts with integrin ITGA5:ITGB1. Interacts with VHL; this interaction inhibits HIF1A degradation.

Its subcellular location is the secreted. Multifunctional protein that plays a critical role in regulating the availability of IGFs such as IGF1 and IGF2 to their receptors and thereby regulates IGF-mediated cellular processes including cell migration, proliferation, differentiation or apoptosis in a cell-type specific manner. Also plays a positive role in cell migration by interacting with integrin ITGA5:ITGB1 through its RGD motif. Mechanistically, binding to integrins leads to activation of focal adhesion kinase/PTK2 and stimulation of the mitogen-activated protein kinase (MAPK) pathway. Regulates cardiomyocyte apoptosis by suppressing HIF-1alpha/HIF1A degradation through ubiquitination. The chain is Insulin-like growth factor-binding protein 1 (IGFBP1) from Sus scrofa (Pig).